Consider the following 148-residue polypeptide: Lipoprotein MlpH (148 aa).

A signal peptide spans Met-1–Gly-17. A lipid anchor (N-palmitoyl cysteine) is attached at Cys-18. The S-diacylglycerol cysteine moiety is linked to residue Cys-18. Residues Leu-26–Lys-61 are disordered. Positions Asp-40 to Lys-61 are enriched in basic and acidic residues.

This sequence belongs to the Multicopy lipoprotein (Mlp) family.

It is found in the cell outer membrane. Functionally, an outer membrane protein that may participate in pathogenesis. Some human Lyme disease patients have antibodies against this protein. The Mlp proteins probably undergo intragenic recombination, generating new alleles. The sequence is that of Lipoprotein MlpH from Borreliella burgdorferi (strain ATCC 35210 / DSM 4680 / CIP 102532 / B31) (Borrelia burgdorferi).